The sequence spans 156 residues: Inner membrane protein YlaC (156 aa).

At methionine 1–histidine 35 the chain is on the cytoplasmic side. Residues proline 36 to serine 56 traverse the membrane as a helical segment. The Periplasmic segment spans residues glutamate 57–threonine 58. A helical membrane pass occupies residues leucine 59–phenylalanine 79. Over aspartate 80–serine 156 the chain is Cytoplasmic.

It localises to the cell inner membrane. The protein is Inner membrane protein YlaC (ylaC) of Escherichia coli (strain K12).